The chain runs to 382 residues: 3-dehydroquinate synthase (382 aa).

Residues 115–119, 139–140, K152, and K161 each bind NAD(+); these read GVVGD and TS. Zn(2+) is bound by residues E194, H256, and H274.

This sequence belongs to the sugar phosphate cyclases superfamily. Dehydroquinate synthase family. Co(2+) serves as cofactor. Requires Zn(2+) as cofactor. It depends on NAD(+) as a cofactor.

It localises to the cytoplasm. The enzyme catalyses 7-phospho-2-dehydro-3-deoxy-D-arabino-heptonate = 3-dehydroquinate + phosphate. The protein operates within metabolic intermediate biosynthesis; chorismate biosynthesis; chorismate from D-erythrose 4-phosphate and phosphoenolpyruvate: step 2/7. Catalyzes the conversion of 3-deoxy-D-arabino-heptulosonate 7-phosphate (DAHP) to dehydroquinate (DHQ). The sequence is that of 3-dehydroquinate synthase from Rhodopseudomonas palustris (strain BisB18).